The chain runs to 268 residues: MNWNAHGAKILDMIRNSKPLVHHITNLVVMNDTANVTLHLGALPVMAHAVEEMEEMTSIASALVINIGTLSKHWIEAMFKAGKTANDKGIPIILDPVGAGATSYRTETCHRLLEELSVSVIRGNLGEVSILAGLGGEVKGVESVSAGGDAVDVAKALAAKQNCTVSITGKEDVISDGTRTVLVDNGHEWLTTLTGTGCSSTTAVAAFSAVERIPVTAAACALMCYGLAAEIAAPQAKGPASFKVAFYDALYNLNAEQIEKGGRVREVS.

Met-46 is a substrate binding site. ATP contacts are provided by Arg-122 and Thr-168. Gly-195 lines the substrate pocket.

It belongs to the Thz kinase family. It depends on Mg(2+) as a cofactor.

The catalysed reaction is 5-(2-hydroxyethyl)-4-methylthiazole + ATP = 4-methyl-5-(2-phosphooxyethyl)-thiazole + ADP + H(+). It functions in the pathway cofactor biosynthesis; thiamine diphosphate biosynthesis; 4-methyl-5-(2-phosphoethyl)-thiazole from 5-(2-hydroxyethyl)-4-methylthiazole: step 1/1. Catalyzes the phosphorylation of the hydroxyl group of 4-methyl-5-beta-hydroxyethylthiazole (THZ). The chain is Hydroxyethylthiazole kinase from Desulfatibacillum aliphaticivorans.